A 263-amino-acid polypeptide reads, in one-letter code: Proteasome subunit alpha type-1 (263 aa).

Met1 is subject to N-acetylmethionine. Ser110 is modified (phosphoserine; alternate). A glycan (O-linked (GlcNAc) serine; alternate) is linked at Ser110. Lys115 is covalently cross-linked (Glycyl lysine isopeptide (Lys-Gly) (interchain with G-Cter in ubiquitin)). Ser177 is modified (phosphoserine). Lys208 is covalently cross-linked (Glycyl lysine isopeptide (Lys-Gly) (interchain with G-Cter in ubiquitin)). The tract at residues 232-263 (FLDGLEERPQRKAQPSQAAEEPAEKADEPMEH) is disordered. Positions 253–263 (PAEKADEPMEH) are enriched in basic and acidic residues.

Belongs to the peptidase T1A family. The 26S proteasome consists of a 20S proteasome core and two 19S regulatory subunits. The 20S proteasome core is a barrel-shaped complex made of 28 subunits that are arranged in four stacked rings. The two outer rings are each formed by seven alpha subunits, and the two inner rings are formed by seven beta subunits. The proteolytic activity is exerted by three beta-subunits PSMB5, PSMB6 and PSMB7. Interacts with NOTCH3. Interacts with ZFAND1. C-terminal extension is partially cleaved off by limited proteolysis leading to a conversion of the proteasome from its latent into its active form. In terms of tissue distribution, detected in liver (at protein level).

It is found in the cytoplasm. The protein localises to the nucleus. Component of the 20S core proteasome complex involved in the proteolytic degradation of most intracellular proteins. This complex plays numerous essential roles within the cell by associating with different regulatory particles. Associated with two 19S regulatory particles, forms the 26S proteasome and thus participates in the ATP-dependent degradation of ubiquitinated proteins. The 26S proteasome plays a key role in the maintenance of protein homeostasis by removing misfolded or damaged proteins that could impair cellular functions, and by removing proteins whose functions are no longer required. Associated with the PA200 or PA28, the 20S proteasome mediates ubiquitin-independent protein degradation. This type of proteolysis is required in several pathways including spermatogenesis (20S-PA200 complex) or generation of a subset of MHC class I-presented antigenic peptides (20S-PA28 complex). In Mus musculus (Mouse), this protein is Proteasome subunit alpha type-1 (Psma1).